Reading from the N-terminus, the 360-residue chain is Peptide chain release factor 1 (360 aa).

Position 235 is an N5-methylglutamine (Gln235). A disordered region spans residues 285–313; the sequence is KRQQAEASTRRNLLGSGDRSDRNRTYNFP.

The protein belongs to the prokaryotic/mitochondrial release factor family. Methylated by PrmC. Methylation increases the termination efficiency of RF1.

It localises to the cytoplasm. Its function is as follows. Peptide chain release factor 1 directs the termination of translation in response to the peptide chain termination codons UAG and UAA. This is Peptide chain release factor 1 from Salmonella paratyphi A (strain ATCC 9150 / SARB42).